The chain runs to 84 residues: Small ribosomal subunit protein bS20 (84 aa).

This sequence belongs to the bacterial ribosomal protein bS20 family.

Functionally, binds directly to 16S ribosomal RNA. The polypeptide is Small ribosomal subunit protein bS20 (Porphyromonas gingivalis (strain ATCC 33277 / DSM 20709 / CIP 103683 / JCM 12257 / NCTC 11834 / 2561)).